Reading from the N-terminus, the 226-residue chain is uncharacterized protein (226 aa).

One can recognise an HTH arsR-type domain in the interval 1 to 92 (MNPNIAKISS…QLLHIAPKAK (92 aa)). The H-T-H motif DNA-binding region spans 32 to 55 (AGELAYLANIKPQTASFHLNKLLE).

This is an uncharacterized protein from Bacillus subtilis (strain 168).